Here is a 156-residue protein sequence, read N- to C-terminus: SCP2 sterol-binding domain-containing protein 1 (156 aa).

In terms of domain architecture, SCP2 spans 44–156 (SFPVFQDIRL…ERVFKDWAKF (113 aa)).

The protein is SCP2 sterol-binding domain-containing protein 1 (SCP2D1) of Homo sapiens (Human).